The sequence spans 501 residues: G protein-activated inward rectifier potassium channel 1 (501 aa).

Residues 1–40 (MSALRRKFGDDYQVVTTSSSGSGLQPQGPGQGPQQQLVPK) are disordered. At 1–80 (MSALRRKFGD…LFTTLVDLKW (80 aa)) the chain is on the cytoplasmic side. Positions 18 to 37 (SSSGSGLQPQGPGQGPQQQL) are enriched in low complexity. A helical transmembrane segment spans residues 81–105 (RWNLFIFILTYTVAWLFMASMWWVI). Residues 106–129 (AYTRGDLNKAHVGNYTPCVANVYN) are Extracellular-facing. N-linked (GlcNAc...) asparagine glycosylation is present at Asn119. Residues 130-141 (FPSAFLFFIETE) constitute an intramembrane region (helical; Pore-forming). Positions 142 to 148 (ATIGYGY) form an intramembrane region, pore-forming. The Selectivity filter motif lies at 143 to 148 (TIGYGY). Over 149–157 (RYITDKCPE) the chain is Extracellular. The helical transmembrane segment at 158–179 (GIILFLFQSILGSIVDAFLIGC) threads the bilayer. Residues 180-501 (MFIKMSQPKK…LRKMNSDRFT (322 aa)) are Cytoplasmic-facing. Positions 182–209 (IKMSQPKKRAETLMFSEHAVISMRDGKL) are polyphosphoinositide (PIP2)-binding. 2 positions are modified to phosphoserine: Ser385 and Ser424. Residues 456-467 (TKMLSDPMSQSV) are compositionally biased toward polar residues. The disordered stretch occupies residues 456–501 (TKMLSDPMSQSVADLPPKLQKMAGGPTRMEGNLPAKLRKMNSDRFT).

The protein belongs to the inward rectifier-type potassium channel (TC 1.A.2.1) family. KCNJ3 subfamily. In terms of assembly, associates with KCNJ5/GIRK4 or KCNJ6/GIRK2 to form a G-protein activated heteromultimer pore-forming unit. The resulting inward current is much larger. Associates with KCNJ9/GIRK3 to form a G-protein activated heteromultimer pore-forming unit.

The protein resides in the membrane. The catalysed reaction is K(+)(in) = K(+)(out). Heteromultimer composed of KCNJ3/GIRK1 and KCNJ5/GIRK4 is activated by phosphatidylinositol 4,5 biphosphate (PtdIns(4,5)P2). Inward rectifier potassium channels are characterized by a greater tendency to allow potassium to flow into the cell rather than out of it. Their voltage dependence is regulated by the concentration of extracellular potassium; as external potassium is raised, the voltage range of the channel opening shifts to more positive voltages. The inward rectification is mainly due to the blockage of outward current by internal magnesium. This potassium channel is controlled by G proteins. This receptor plays a crucial role in regulating the heartbeat. Forms a functional channel in association with KCNJ9/GIRK3. This is G protein-activated inward rectifier potassium channel 1 (Kcnj3) from Rattus norvegicus (Rat).